Reading from the N-terminus, the 135-residue chain is Large ribosomal subunit protein uL16c (135 aa).

It belongs to the universal ribosomal protein uL16 family. As to quaternary structure, part of the 50S ribosomal subunit.

The protein resides in the plastid. It localises to the chloroplast. The chain is Large ribosomal subunit protein uL16c from Gossypium barbadense (Sea Island cotton).